The sequence spans 313 residues: Tyrosine--tRNA ligase (313 aa).

An L-tyrosine-binding site is contributed by Tyr-32. The short motif at 37 to 45 (PSGEIHLGH) is the 'HIGH' region element. L-tyrosine-binding residues include Tyr-152, Gln-156, Asp-159, and Gln-174. The 'KMSKS' region signature appears at 208–212 (KMSSS). Ser-211 is an ATP binding site.

The protein belongs to the class-I aminoacyl-tRNA synthetase family. TyrS type 3 subfamily. Homodimer.

Its subcellular location is the cytoplasm. It carries out the reaction tRNA(Tyr) + L-tyrosine + ATP = L-tyrosyl-tRNA(Tyr) + AMP + diphosphate + H(+). Its function is as follows. Catalyzes the attachment of tyrosine to tRNA(Tyr) in a two-step reaction: tyrosine is first activated by ATP to form Tyr-AMP and then transferred to the acceptor end of tRNA(Tyr). The chain is Tyrosine--tRNA ligase from Methanospirillum hungatei JF-1 (strain ATCC 27890 / DSM 864 / NBRC 100397 / JF-1).